The following is a 496-amino-acid chain: Glycerol kinase (496 aa).

Residue threonine 12 participates in ADP binding. Positions 12, 13, and 14 each coordinate ATP. Threonine 12 serves as a coordination point for sn-glycerol 3-phosphate. Arginine 16 provides a ligand contact to ADP. The sn-glycerol 3-phosphate site is built by arginine 82, glutamate 83, and tyrosine 134. Arginine 82, glutamate 83, and tyrosine 134 together coordinate glycerol. Histidine 230 bears the Phosphohistidine; by HPr mark. Aspartate 244 provides a ligand contact to sn-glycerol 3-phosphate. Glycerol contacts are provided by aspartate 244 and glutamine 245. ADP is bound by residues threonine 266 and glycine 309. Residues threonine 266, glycine 309, glutamine 313, and glycine 410 each coordinate ATP. ADP-binding residues include glycine 410 and asparagine 414.

The protein belongs to the FGGY kinase family. Homotetramer and homodimer (in equilibrium). Post-translationally, the phosphoenolpyruvate-dependent sugar phosphotransferase system (PTS), including enzyme I, and histidine-containing protein (HPr) are required for the phosphorylation, which leads to the activation of the enzyme.

The enzyme catalyses glycerol + ATP = sn-glycerol 3-phosphate + ADP + H(+). Its pathway is polyol metabolism; glycerol degradation via glycerol kinase pathway; sn-glycerol 3-phosphate from glycerol: step 1/1. With respect to regulation, activated by phosphorylation and inhibited by fructose 1,6-bisphosphate (FBP). Its function is as follows. Key enzyme in the regulation of glycerol uptake and metabolism. Catalyzes the phosphorylation of glycerol to yield sn-glycerol 3-phosphate. The chain is Glycerol kinase from Geobacillus kaustophilus (strain HTA426).